Here is a 537-residue protein sequence, read N- to C-terminus: Pancreatic secretory granule membrane major glycoprotein GP2 (537 aa).

Positions 1–28 are cleaved as a signal peptide; it reads MPHLMERMVGSGLLWLALVSCILTQASA. The tract at residues 41–60 is beta hairpin; it reads SYGLDLDCGAPGTPEAHVCF. Cystine bridges form between Cys48–Cys59, Cys63–Cys157, Cys85–Cys172, Cys107–Cys145, Cys113–Cys177, Cys138–Cys146, Cys190–Cys200, Cys194–Cys209, Cys211–Cys241, Cys229–Cys320, and Cys261–Cys284. The interval 61–81 is D10C; sequence DPCQNYTLLDEPFRSTENSAG. An N-linked (GlcNAc...) (high mannose) asparagine glycan is attached at Asn65. N-linked (GlcNAc...) asparagine glycans are attached at residues Asn88, Asn122, and Asn134. In terms of domain architecture, EGF-like spans 186 to 230; sequence VEDKCEKACRPEEECLALNSTWGCFCRQDLNSSDVHSLQPQLDCG. Asn204, Asn216, and Asn260 each carry an N-linked (GlcNAc...) asparagine glycan. The segment at 228–321 is ZP-N; sequence DCGPREIKVK…TILNINFQCA (94 aa). The ZP domain maps to 228–484; the sequence is DCGPREIKVK…PSCSRSQVRS (257 aa). 2 N-linked (GlcNAc...) asparagine glycosylation sites follow: Asn291 and Asn342. Residues 322–345 form a flexible ZP-N/ZP-C linker region; sequence YPLDMKVSLQAALQPIVSSLNVSV. Residues 346–357 form an internal hydrophobic patch (IHP) region; sequence DGNGEFIVRMAL. Residues 346 to 484 form a ZP-C region; it reads DGNGEFIVRM…PSCSRSQVRS (139 aa). Asn362 carries an N-linked (GlcNAc...) asparagine glycan. Cystine bridges form between Cys401-Cys461, Cys422-Cys477, and Cys466-Cys473. The interval 491–499 is external hydrophobic patch (EHP); sequence LARVLDLGP. The GPI-anchor amidated asparagine moiety is linked to residue Asn512. A propeptide spans 513–537 (removed in mature form); the sequence is GTPSTAGFLVAWPMVLLTVLLAWLF.

As to quaternary structure, interacts with SYCN. Interacts with bacterial adhesin fimH. Post-translationally, N-glycosylated. Glycosylated Asn-65 may be required for interaction with bacterial adhesin fimH. Expressed in pancreas (at protein level). Specifically expressed by M (microfold) cells which are atypical epithelial cells of the intestine (at protein level).

The protein resides in the zymogen granule membrane. Its subcellular location is the secreted. It is found in the cell membrane. The protein localises to the apical cell membrane. It localises to the membrane raft. The protein resides in the endosome. Functions as an intestinal M-cell transcytotic receptor specific for type-I-piliated bacteria that participates in the mucosal immune response toward these bacteria. At the apical membrane of M-cells it binds fimH, a protein of the bacteria type I pilus tip. Internalizes bound bacteria, like E.coli and S.typhimurium, from the lumen of the intestine and delivers them, through M-cells, to the underlying organized lymphoid follicles where they are captured by antigen-presenting dendritic cells to elicit a mucosal immune response. This Homo sapiens (Human) protein is Pancreatic secretory granule membrane major glycoprotein GP2.